We begin with the raw amino-acid sequence, 80 residues long: Sec-independent protein translocase protein TatA (80 aa).

The helical transmembrane segment at 1 to 21 threads the bilayer; sequence MGQIGIWQILIIALVILVLFG. Residues 38-80 are disordered; the sequence is SFKKGLNEEDKPAEPAAKIEGPSHEAKPAGEAAKDPRPADKQG. A compositionally biased stretch (basic and acidic residues) spans 58 to 80; it reads GPSHEAKPAGEAAKDPRPADKQG.

Belongs to the TatA/E family. As to quaternary structure, the Tat system comprises two distinct complexes: a TatABC complex, containing multiple copies of TatA, TatB and TatC subunits, and a separate TatA complex, containing only TatA subunits. Substrates initially bind to the TatABC complex, which probably triggers association of the separate TatA complex to form the active translocon.

The protein localises to the cell inner membrane. Functionally, part of the twin-arginine translocation (Tat) system that transports large folded proteins containing a characteristic twin-arginine motif in their signal peptide across membranes. TatA could form the protein-conducting channel of the Tat system. The polypeptide is Sec-independent protein translocase protein TatA (Erythrobacter litoralis (strain HTCC2594)).